The sequence spans 353 residues: Jasmonate-induced oxygenase 4 (353 aa).

The Fe2OG dioxygenase domain occupies 202–302 (VGASLRTNFY…RVSLAFFYNP (101 aa)). Arg207 contacts jasmonate. 2-oxoglutarate is bound by residues Asn209 and Tyr211. Fe cation contacts are provided by His226, Asp228, and His283. The 2-oxoglutarate site is built by Arg293 and Ser295. Positions 332 and 336 each coordinate jasmonate.

It belongs to the iron/ascorbate-dependent oxidoreductase family. L-ascorbate serves as cofactor. Fe(2+) is required as a cofactor.

The catalysed reaction is jasmonate + 2-oxoglutarate + O2 = (1R,2R)-12-hydroxyjasmonate + succinate + CO2. Its function is as follows. 2-oxoglutarate-dependent dioxygenase involved in the oxidation of jasmonate (JA), a stress-induced phytohormone synthesized in response to attack by pathogens and herbivores, which triggers the activation of defense responses via the JA-mediated signaling pathway. Converts JA to 12-hydroxyjasmonate (12OH-JA), an inactive form of JA. Is specific to free JA, and cannot oxidize the bioactive form jasmonoyl-L-isoleucine (JA-Ile) or other JA-amino acid conjugates. Prevents over-accumulation of JA and indirectly its bioactive form JA-Ile under stress response. Acts as a negative regulator of JA-mediated defense signaling, by contributing to 12OH-JA accumulation, which represses JA defense responses upon infection by the fungal pathogen Botrytis cinerea. Acts as a negative regulator of JA-mediated defense responses upon infestation by the herbivorous caterpillar Mamestra brassicae. In Arabidopsis thaliana (Mouse-ear cress), this protein is Jasmonate-induced oxygenase 4.